Reading from the N-terminus, the 252-residue chain is Isoprenyl transferase 2 (252 aa).

D26 is a catalytic residue. A Mg(2+)-binding site is contributed by D26. Substrate is bound by residues 27-30 (GNGR), W31, R39, H43, and 71-73 (SSE). N74 (proton acceptor) is an active-site residue. Residues W75, R77, R194, and 200–202 (RLS) each bind substrate. A Mg(2+)-binding site is contributed by E213.

The protein belongs to the UPP synthase family. Homodimer. Mg(2+) serves as cofactor.

Functionally, catalyzes the condensation of isopentenyl diphosphate (IPP) with allylic pyrophosphates generating different type of terpenoids. This is Isoprenyl transferase 2 from Bradyrhizobium diazoefficiens (strain JCM 10833 / BCRC 13528 / IAM 13628 / NBRC 14792 / USDA 110).